The chain runs to 401 residues: Cysteine desulfurase CsdA (401 aa).

At Lys-222 the chain carries N6-(pyridoxal phosphate)lysine. The active-site Cysteine persulfide intermediate is Cys-358.

The protein belongs to the class-V pyridoxal-phosphate-dependent aminotransferase family. Csd subfamily. As to quaternary structure, homodimer. Forms a heterodimer with CsdE. Pyridoxal 5'-phosphate is required as a cofactor.

It catalyses the reaction (sulfur carrier)-H + L-cysteine = (sulfur carrier)-SH + L-alanine. It carries out the reaction L-selenocysteine + AH2 = hydrogenselenide + L-alanine + A + H(+). The catalysed reaction is 3-sulfino-L-alanine + H2O = sulfite + L-alanine + H(+). With respect to regulation, cysteine desulfurase activity is increased 2-fold in the presence of CsdE. Functionally, catalyzes the removal of elemental sulfur and selenium atoms from L-cysteine, L-cystine, L-selenocysteine, and L-selenocystine to produce L-alanine, and transiently retains the released sulfur atom on a cysteine residue, in the form of a persulfide. Can also desulfinate L-cysteine sulfinate (3-sulfino-L-alanine), which is the best substrate of the enzyme. Functions as a selenium delivery protein in the pathway for the biosynthesis of selenophosphate. Seems to participate in Fe/S biogenesis by recruiting the SufBCD-SufE proteins. Transfers sulfur to CsdE that increases the cysteine desulfurase activity of CsdA. Can also transfer sulfur directly to TcdA/CsdL in vitro. Appears to support the function of TcdA in the generation of cyclic threonylcarbamoyladenosine at position 37 (ct(6)A37) in tRNAs that read codons beginning with adenine. This is Cysteine desulfurase CsdA (csdA) from Escherichia coli (strain K12).